Reading from the N-terminus, the 236-residue chain is Potassium/proton antiporter CemA (236 aa).

4 consecutive transmembrane segments (helical) span residues 18-38 (YIISLSFFFILIYQLLNFLVL), 114-134 (IAHVFTDLLIAFLIFCLLINA), 161-181 (LILFTDIFVGFHSSHGWKILI), and 196-216 (FIFLFVATFPVILDTLFKYWI).

The protein belongs to the CemA family.

It localises to the plastid. The protein localises to the chloroplast inner membrane. The catalysed reaction is K(+)(in) + H(+)(out) = K(+)(out) + H(+)(in). Its function is as follows. Contributes to K(+)/H(+) antiport activity by supporting proton efflux to control proton extrusion and homeostasis in chloroplasts in a light-dependent manner to modulate photosynthesis. Prevents excessive induction of non-photochemical quenching (NPQ) under continuous-light conditions. Indirectly promotes efficient inorganic carbon uptake into chloroplasts. The polypeptide is Potassium/proton antiporter CemA (Mesostigma viride (Green alga)).